The primary structure comprises 488 residues: Protein DETOXIFICATION 35 (488 aa).

12 helical membrane-spanning segments follow: residues 38-58 (LWMI…VSSV), 73-93 (AVSI…LGMG), 121-141 (IILF…TPVL), 150-170 (IAVP…SLAF), 187-207 (IAWI…LFII), 218-238 (LAFN…VIGW), 262-282 (IASA…IVLT), 296-316 (SICM…NAAI), 336-356 (VYVT…AIII), 379-401 (AYLL…VAVG), 408-428 (VAYI…YLLG), and 439-459 (WSGM…VLYK).

It belongs to the multi antimicrobial extrusion (MATE) (TC 2.A.66.1) family. In terms of tissue distribution, highly expressed in inflorescence tissues, especially in floral epidermal guard cells including those of the anthers, stigma, siliques and nectaries. Also detected in the meristematic zone of the root apex and in the elongation zone through to the fully expanded cells of the differentiation zone.

It is found in the vacuole membrane. Its function is as follows. Multidrug and toxin efflux transporter involved in flavonoid metabolism. Required for proper reproductive development. This Arabidopsis thaliana (Mouse-ear cress) protein is Protein DETOXIFICATION 35.